The following is a 788-amino-acid chain: Integrin beta-6 (788 aa).

The first 21 residues, 1 to 21, serve as a signal peptide directing secretion; sequence MGIELLCLFFLCLGRNDHVQG. The 50-residue stretch at 22-71 folds into the PSI domain; that stretch reads GCAVGGAETCEDCLLIGPQCAWCSQENFTHLSGVGERCDTPANLLAKGCQ. Topologically, residues 22–709 are extracellular; that stretch reads GCAVGGAETC…KDCPKPPNIP (688 aa). 19 disulfide bridges follow: Cys23–Cys41, Cys31–Cys454, Cys34–Cys59, Cys44–Cys70, Cys197–Cys204, Cys252–Cys293, Cys394–Cys406, Cys426–Cys452, Cys456–Cys476, Cys467–Cys479, Cys481–Cys490, Cys492–Cys519, Cys502–Cys517, Cys511–Cys522, Cys524–Cys537, Cys539–Cys560, Cys544–Cys558, Cys552–Cys563, and Cys565–Cys574. Residues Asn48 and Asn97 are each glycosylated (N-linked (GlcNAc...) asparagine). Residues 131-371 enclose the VWFA domain; the sequence is YPVDLYYLMD…QLIISAYEEL (241 aa). Mg(2+) contacts are provided by Asp140, Ser142, and Ser144. 4 residues coordinate Ca(2+): Ser144, Asp147, Asp148, and Glu179. Residues Asn235, Asp237, Pro239, and Glu240 each coordinate Ca(2+). Mg(2+) is bound at residue Glu240. Asn260 carries an N-linked (GlcNAc...) asparagine glycan. The Ca(2+) site is built by Asp271 and Lys355. N-linked (GlcNAc...) asparagine glycosylation is present at Asn387. A glycan (N-linked (GlcNAc...) asparagine) is linked at Asn418. I-EGF domains are found at residues 456–491, 492–538, 539–575, and 576–615; these read CQKE…HHCE, CGED…PYCQ, CDNF…EYCN, and CTTS…PTCE. Residues Asn463 and Asn471 are each glycosylated (N-linked (GlcNAc...) asparagine). Asn541 is a glycosylation site (N-linked (GlcNAc...) asparagine). The N-linked (GlcNAc...) asparagine glycan is linked to Asn575. 9 cysteine pairs are disulfide-bonded: Cys576–Cys599, Cys583–Cys597, Cys591–Cys602, Cys604–Cys614, Cys617–Cys620, Cys624–Cys670, Cys630–Cys649, Cys633–Cys645, and Cys678–Cys702. Residues 710 to 730 form a helical membrane-spanning segment; sequence MIMLGVSLAILLIGVVLLCIW. The interaction with HAX1 stretch occupies residues 731–758; sequence KLLVSFHDRKEVAKFEAERSKAKWQTGT. The Cytoplasmic portion of the chain corresponds to 731-788; sequence KLLVSFHDRKEVAKFEAERSKAKWQTGTNPLYRGSTSTFKNVTYKHKEKQKVDLSTDG.

It belongs to the integrin beta chain family. As to quaternary structure, heterodimer of an alpha and a beta subunit. Interacts with FLNB. Interacts with HAX1. ITGAV:ITGB6 interacts with FBN1. ITGAV:ITGB6 interacts with TGFB1.

It localises to the cell membrane. The protein resides in the cell junction. It is found in the focal adhesion. Its function is as follows. Integrin alpha-V:beta-6 (ITGAV:ITGB6) is a receptor for fibronectin and cytotactin. It recognizes the sequence R-G-D in its ligands. ITGAV:ITGB6 acts as a receptor for fibrillin-1 (FBN1) and mediates R-G-D-dependent cell adhesion to FBN1. Integrin alpha-V:beta-6 (ITGAV:ITGB6) mediates R-G-D-dependent release of transforming growth factor beta-1 (TGF-beta-1) from regulatory Latency-associated peptide (LAP), thereby playing a key role in TGF-beta-1 activation. The polypeptide is Integrin beta-6 (ITGB6) (Bos taurus (Bovine)).